Reading from the N-terminus, the 254-residue chain is Nickel import ATP-binding protein NikD (254 aa).

Residues 2–241 (PQQIELRDIA…PKHAVTRSLV (240 aa)) form the ABC transporter domain. 36 to 43 (GGSGSGKS) provides a ligand contact to ATP.

It belongs to the ABC transporter superfamily. Nickel importer (TC 3.A.1.5.3) family. As to quaternary structure, the complex is composed of two ATP-binding proteins (NikD and NikE), two transmembrane proteins (NikB and NikC) and a solute-binding protein (NikA).

It is found in the cell inner membrane. It catalyses the reaction Ni(2+)(out) + ATP + H2O = Ni(2+)(in) + ADP + phosphate + H(+). In terms of biological role, part of the ABC transporter complex NikABCDE involved in nickel import. Responsible for energy coupling to the transport system. This is Nickel import ATP-binding protein NikD from Shigella dysenteriae serotype 1 (strain Sd197).